Here is a 438-residue protein sequence, read N- to C-terminus: Keratin, type I cytoskeletal 13 (438 aa).

The segment at 1–95 (MSCRFQSSSM…SVDGGLLSGN (95 aa)) is head. Omega-N-methylarginine is present on residues R27 and R35. Residues 96–131 (EKITMQNLNDRLASYLEKVRALEAANADLEVKIRDW) are coil. One can recognise an IF rod domain in the interval 96–408 (EKITMQNLND…SLLEGQDAKM (313 aa)). The interval 132–150 (HLKQSPTSPERDYSAYYKT) is linker 1. The tract at residues 151–242 (IEELRIKILE…KNHEEEMKEF (92 aa)) is coil 1B. Residues 243–265 (SNQAVGQVNVEMDATPGIDLTRV) form a linker 12 region. Residues 266–404 (LAEMREQYEA…ATYRSLLEGQ (139 aa)) are coil 2. The segment at 405 to 438 (DAKMTGFNTGGNSTTTSNTSTSPSTSGRPDFRKY) is tail. The interval 408 to 438 (MTGFNTGGNSTTTSNTSTSPSTSGRPDFRKY) is disordered. Positions 409 to 431 (TGFNTGGNSTTTSNTSTSPSTSG) are enriched in low complexity.

It belongs to the intermediate filament family. Heterotetramer of two type I and two type II keratins. In terms of processing, O-glycosylated; glycans consist of single N-acetylglucosamine residues.

Type 1 keratin. Maintains postnatal tongue mucosal cell homeostasis and tissue organization in response to mechanical stress, potentially via regulation of the G1/S phase cyclins CCNE1 and CCNE2. The protein is Keratin, type I cytoskeletal 13 of Rattus norvegicus (Rat).